A 515-amino-acid chain; its full sequence is Maturase K (515 aa).

This sequence belongs to the intron maturase 2 family. MatK subfamily.

It is found in the plastid. The protein localises to the chloroplast. In terms of biological role, usually encoded in the trnK tRNA gene intron. Probably assists in splicing its own and other chloroplast group II introns. The protein is Maturase K of Trillium pusillum (Dwarf wakerobin).